Consider the following 431-residue polypeptide: MIQPSTLPGMMELLPEDQLVFDTIKRKIEDVFIKNAFFSIDTPAIEKLDVLLSKGGGETSKQVFRIDNSKKNQGLRFDLTVPLAKYVSMYMQDLAFPFRRYQIAKVYRGERNQKGRYKEFYQCDIDIIGNEKLSLYNDAEIVKCMYEALKSIDVPEFEFQFNNRKILNGYFSYLGIDDFESCLRVIDKLDKIGIDNVKEELSKINLDASKIDTLLKFLEIDGTNQEIIEKLESLNIDNELFTCGVNELKFVYQDILSLGVNPENIKINLSITRGLDYYTGSVFETFFKDYREIGSICSGGRYDSLANNFTKSKLPGVGMSIGLTRLFYQLQELNLVKGKQTNFDCIIIPMKGYEKNAVKLMNDLRNSSVKCMSYLEDDKLKKKFNYADKLSVKYVIIIGQDEVEQNKFTLRNMENGNQELLELNEIIEKLK.

Belongs to the class-II aminoacyl-tRNA synthetase family. As to quaternary structure, homodimer.

Its subcellular location is the cytoplasm. It carries out the reaction tRNA(His) + L-histidine + ATP = L-histidyl-tRNA(His) + AMP + diphosphate + H(+). The sequence is that of Histidine--tRNA ligase from Finegoldia magna (strain ATCC 29328 / DSM 20472 / WAL 2508) (Peptostreptococcus magnus).